Reading from the N-terminus, the 496-residue chain is MWQLVFFALSCDLVLAAAYNNFRKSMDSTGKRQYQVQHGPCSYTFLLPETDNCRSPSSSYVSNAVQRDAPLDYDDSVRRLQVLENIMENNTQWLMKLESYIQDNMKKEMVEIQQNAVQNQTAVMIEIGTNLLNQTAEQTRKLTDVEAQVLNQTTRLELQLLEHSLSTNKLEKQILDQTSEINKLQDKNSFLEKKVLDMEDKHIVQLQSIKEEKDQLQVLVSKQNSIIEELEKQLVTATVNNSVLQKQQHDLMETVHNLLTMISTSNSAKHSLVAKEEQIIFRDCAEAFKSGLTTSGTYTLTFPNSTEETKAYCDMETGGGGWTVIQRREDGSVDFQRTWKEYKMGFGSPSGEHWLGNEFVSQVTNQKRYVLKIHLRDWEGNEAYSLYEHFYLSSEEFNYRIHLKGLTGTAGKISSISQPGNDFSTKDADNDKCICKCSQMLTGGWWFDACGPSNLNGMYYPQRQNTNKFNGIKWYYWKGSGYSLKATTMMIRPADF.

The signal sequence occupies residues 1 to 18; sequence MWQLVFFALSCDLVLAAA. N-linked (GlcNAc...) asparagine glycans are attached at residues N89, N119, N133, N151, N240, and N304. Residues 130–255 adopt a coiled-coil conformation; it reads NLLNQTAEQT…KQQHDLMETV (126 aa). The region spanning 275-495 is the Fibrinogen C-terminal domain; sequence KEEQIIFRDC…ATTMMIRPAD (221 aa). Residues C284 and C313 are joined by a disulfide bond. D429, D431, C433, and C435 together coordinate Ca(2+). 2 cysteine pairs are disulfide-bonded: C433–C435 and C437–C450.

In terms of assembly, interacts with TEK/TIE2, competing for the same binding site as ANGPT1. Interacts with ITGA5. Interacts with SVEP1/polydom. Interacts with THBD; this interaction significantly inhibits the generation of activated PC and TAFIa/CPB2 by the thrombin/thrombomodulin complex.

Its subcellular location is the secreted. Binds to TEK/TIE2, competing for the ANGPT1 binding site, and modulating ANGPT1 signaling. Can induce tyrosine phosphorylation of TEK/TIE2 in the absence of ANGPT1. In the absence of angiogenic inducers, such as VEGF, ANGPT2-mediated loosening of cell-matrix contacts may induce endothelial cell apoptosis with consequent vascular regression. In concert with VEGF, it may facilitate endothelial cell migration and proliferation, thus serving as a permissive angiogenic signal. Involved in the regulation of lymphangiogenesis. The polypeptide is Angiopoietin-2 (ANGPT2) (Sus scrofa (Pig)).